A 431-amino-acid polypeptide reads, in one-letter code: MSKIVKVIGREIIDSRGNPTVEAEVHLEGGFVGMAAAPSGASTGSREALELRDGDKSRYMGKGVLKAVGAVNGPIAQAVLGKDAKDQAGIDKIMIDLDGTENKSNFGANAILAVSLATAKAAAASKGQALFEHIAELNGTPGKYSMPVPMMNIINGGEHADNNVDIQEFMIQPVGAKSLKEAVRMGSEVFHNLAKVLKAKGMNTAVGDEGGYAPNLGSNAEALAVIAEAVKAAGYELGTDITLAMDCAASEFYKDGKYVLAGEGNKAFTSEEFTHFLEDLTKQYPIVSIEDGLDESDWDGFAYQTKVLGDKIQLVGDDLFVTNTKILKEGIDKGIVNSILIKFNQIGSLTETLAAIKMAKDAGYTAVISHRSGETEDATIADLAVGTAAGQIKTGSMSRSDRVAKYNQLIRIEEALGEKAPYNGRKEIKGQ.

Glutamine 167 is a binding site for (2R)-2-phosphoglycerate. The Proton donor role is filled by glutamate 209. 3 residues coordinate Mg(2+): aspartate 246, glutamate 290, and aspartate 317. The (2R)-2-phosphoglycerate site is built by lysine 342, arginine 371, serine 372, and lysine 393. Lysine 342 acts as the Proton acceptor in catalysis.

This sequence belongs to the enolase family. In terms of assembly, component of the RNA degradosome, a multiprotein complex involved in RNA processing and mRNA degradation. It depends on Mg(2+) as a cofactor.

It localises to the cytoplasm. Its subcellular location is the secreted. The protein localises to the cell surface. The catalysed reaction is (2R)-2-phosphoglycerate = phosphoenolpyruvate + H2O. Its pathway is carbohydrate degradation; glycolysis; pyruvate from D-glyceraldehyde 3-phosphate: step 4/5. Functionally, catalyzes the reversible conversion of 2-phosphoglycerate (2-PG) into phosphoenolpyruvate (PEP). It is essential for the degradation of carbohydrates via glycolysis. The protein is Enolase of Enterobacter sp. (strain 638).